Here is a 273-residue protein sequence, read N- to C-terminus: Protein FAM210A (273 aa).

Positions 97-106 (SSSATSSGPP) are enriched in low complexity. The tract at residues 97-116 (SSSATSSGPPSEKKEDPDPL) is disordered. Residues 107-116 (SEKKEDPDPL) are compositionally biased toward basic and acidic residues. In terms of domain architecture, DUF1279 spans 118–230 (DRSISLYQRF…GYMSTPPPVK (113 aa)). The helical transmembrane segment at 137–157 (VLIPVHLITSAVWFGTFYYAA) threads the bilayer. A coiled-coil region spans residues 230 to 269 (KEYLQDKMEETKELLTEKMEETKDRLTEKLQETKGKVSLK). The segment at 247-273 (KMEETKDRLTEKLQETKGKVSLKKKVE) is disordered.

This sequence belongs to the FAM210 family. Interacts with ATAD3A.

The protein localises to the membrane. The protein resides in the mitochondrion. It is found in the cytoplasm. Functionally, may play a role in the structure and strength of both muscle and bone. The polypeptide is Protein FAM210A (FAM210A) (Bos taurus (Bovine)).